The chain runs to 558 residues: REST corepressor spr-1 (558 aa).

A disordered region spans residues 1 to 106; sequence MDLYDDDGES…KVKGPLSNTN (106 aa). A compositionally biased stretch (acidic residues) spans 36 to 56; sequence TIEENVPEVEENTLLEEDSLV. The span at 69 to 80 shows a compositional bias: basic residues; the sequence is KPSKSKRKRKRS. In terms of domain architecture, ELM2 spans 107-192; that stretch reads KEINVGTEFQ…SAIAEVARRN (86 aa). An SANT 1 domain is found at 193–244; sequence ELKDVWTDQEITLFENCYQIFGKNFSQIRSALCHRSLQSIVQFYYESKKRVK. A GATA-type zinc finger spans residues 271–325; that stretch reads AIFESMCDNCGEKAENMQINNAMNRPECRACLIYFNQTGVPRPTSLRLVLAERIR. Residues 378–402 show a composition bias toward polar residues; the sequence is CTENGNVGETSSPSAQKTEIQSESD. Positions 378-406 are disordered; the sequence is CTENGNVGETSSPSAQKTEIQSESDGSGP. One can recognise an SANT 2 domain in the interval 481 to 532; that stretch reads HYSQDWTQLERSQVIRCFNMYGAHFEHIADVIGTKTPDQVYQFYLENQKAID.

It belongs to the CoREST family. Probably part of a large repressor complex. Interacts with histone demethylase spr-5/lsd-1.

The protein resides in the nucleus. Functionally, probable corepressor protein, which probably participates in the transcriptional repression of the presenilin protein hop-1. Probably acts via the formation of a multiprotein complex that deacetylates and demethylates specific sites on histones. Acts redundantly with the transcriptional repressor lin-35 to play a role in vulval morphogenesis and promote germline proliferation. The polypeptide is REST corepressor spr-1 (Caenorhabditis elegans).